The chain runs to 307 residues: FNKFGKARLYYEALSFEEQDEIYAYTKRNVLPTLTQMNLKYAISAKNRARTVAGVSILSTMTGRMFHQKCLKSIAATRGVPVVIGTTKFYGGWDDMLRRLIKDVDSPVLMGWDYPKCDRAMPNILRIVSSLVLARKHDSCCSHTDRFYRLANECAQVLSEIVMCGGCYYVKPGGTSSGDATTAFANSVFNICQAVSANVCSLMACNGHKIEDLSIRELQKRLYSNVYRADHVDPAFVSEYYEFLNKHFSMMILSDDGVVCYNSEFASKGYIANISAFQQVLYYQNNVFMSEAKCWVETDIEKGPHEF.

Positions 1-76 (FNKFGKARLY…HQKCLKSIAA (76 aa)) are rdRp Fingers N-ter. Positions 1-307 (FNKFGKARLY…TDIEKGPHEF (307 aa)) constitute a Nsp12 RNA-dependent RNA polymerase domain. A rdRp Palm N-ter region spans residues 77–115 (TRGVPVVIGTTKFYGGWDDMLRRLIKDVDSPVLMGWDYP). One can recognise a RdRp catalytic domain in the interval 107–269 (PVLMGWDYPK…CYNSEFASKG (163 aa)). The segment at 116–174 (KCDRAMPNILRIVSSLVLARKHDSCCSHTDRFYRLANECAQVLSEIVMCGGCYYVKPGG) is rdRp Fingers C-ter. A rdRp Palm C-ter region spans residues 175–307 (TSSGDATTAF…TDIEKGPHEF (133 aa)). Active-site residues include Ser254, Asp255, and Asp256. Position 307 (Phe307) is a region of interest, rdRp Thumb.

This sequence belongs to the coronaviruses polyprotein 1ab family.

The enzyme catalyses RNA(n) + a ribonucleoside 5'-triphosphate = RNA(n+1) + diphosphate. Its function is as follows. The replicase polyprotein of coronaviruses is a multifunctional protein: it contains the activities necessary for the transcription of negative stranded RNA, leader RNA, subgenomic mRNAs and progeny virion RNA as well as proteinases responsible for the cleavage of the polyprotein into functional products. Non-structural protein 1: binds to the 40S ribosomal subunit and inhibits host translation. The nsp1-40S ribosome complex further induces an endonucleolytic cleavage near the 5'UTR of host mRNAs, targeting them for degradation. By suppressing host gene expression, nsp1 facilitates efficient viral gene expression in infected cells and evasion from host immune response. The polypeptide is Replicase polyprotein 1ab (rep) (Rattus norvegicus (Rat)).